A 307-amino-acid polypeptide reads, in one-letter code: Myeloid-associated differentiation marker-like protein 2 (307 aa).

2 consecutive MARVEL domains span residues 17–154 (AVTS…ARPG) and 159–303 (YMAT…RIRF). Transmembrane regions (helical) follow at residues 53–73 (FCMA…ACEF), 90–110 (AFAM…PLYF), 129–149 (LAAS…VALT), 163–183 (VSGL…GALV), 198–218 (VAVY…SVMG), 229–249 (RLVV…AVIW), and 278–298 (LVVA…LAYS).

It belongs to the MAL family.

The protein resides in the membrane. The protein is Myeloid-associated differentiation marker-like protein 2 (MYADML2) of Homo sapiens (Human).